A 101-amino-acid chain; its full sequence is Urease subunit beta (101 aa).

Belongs to the urease beta subunit family. Heterotrimer of UreA (gamma), UreB (beta) and UreC (alpha) subunits. Three heterotrimers associate to form the active enzyme.

It localises to the cytoplasm. The enzyme catalyses urea + 2 H2O + H(+) = hydrogencarbonate + 2 NH4(+). It participates in nitrogen metabolism; urea degradation; CO(2) and NH(3) from urea (urease route): step 1/1. In Rhizobium leguminosarum bv. trifolii (strain WSM2304), this protein is Urease subunit beta.